A 240-amino-acid chain; its full sequence is Probable phosphatase Pcar_2586 (240 aa).

Positions 12, 14, 20, 45, 78, 105, 136, 197, and 199 each coordinate Zn(2+).

The protein belongs to the PHP family. It depends on Zn(2+) as a cofactor.

The chain is Probable phosphatase Pcar_2586 from Syntrophotalea carbinolica (strain DSM 2380 / NBRC 103641 / GraBd1) (Pelobacter carbinolicus).